Consider the following 108-residue polypeptide: Long neurotoxin 43 (108 aa).

The N-terminal stretch at 1–21 (MKTLLLTLVVVTIVCLDLAYT) is a signal peptide. Cystine bridges form between Cys24/Cys42, Cys35/Cys63, Cys48/Cys52, Cys67/Cys78, and Cys79/Cys84.

It belongs to the three-finger toxin family. Long-chain subfamily. Type II alpha-neurotoxin sub-subfamily. As to expression, expressed by the venom gland.

Its subcellular location is the secreted. Binds with high affinity to muscular (alpha-1/CHRNA1) and neuronal (alpha-7/CHRNA7) nicotinic acetylcholine receptor (nAChR) and inhibits acetylcholine from binding to the receptor, thereby impairing neuromuscular and neuronal transmission. This Drysdalia coronoides (White-lipped snake) protein is Long neurotoxin 43.